The primary structure comprises 396 residues: Alanine racemase (396 aa).

Catalysis depends on lysine 46, which acts as the Proton acceptor; specific for D-alanine. Lysine 46 is subject to N6-(pyridoxal phosphate)lysine. Residue arginine 145 participates in substrate binding. Catalysis depends on tyrosine 280, which acts as the Proton acceptor; specific for L-alanine. Methionine 328 is a substrate binding site.

Belongs to the alanine racemase family. It depends on pyridoxal 5'-phosphate as a cofactor.

The enzyme catalyses L-alanine = D-alanine. It functions in the pathway amino-acid biosynthesis; D-alanine biosynthesis; D-alanine from L-alanine: step 1/1. Functionally, catalyzes the interconversion of L-alanine and D-alanine. May also act on other amino acids. This is Alanine racemase (alr) from Brucella suis (strain ATCC 23445 / NCTC 10510).